The sequence spans 229 residues: ATP synthase subunit a (229 aa).

A run of 6 helical transmembrane segments spans residues 25-45, 82-102, 104-124, 142-162, 181-201, and 202-222; these read ADAV…SIAA, FFPL…IGLI, GFFP…VVFV, FLGP…IGHL, LVLI…MMLM, and GVLV…IYIQ.

It belongs to the ATPase A chain family. F-type ATPases have 2 components, CF(1) - the catalytic core - and CF(0) - the membrane proton channel. CF(1) has five subunits: alpha(3), beta(3), gamma(1), delta(1), epsilon(1). CF(0) has three main subunits: a(1), b(2) and c(9-12). The alpha and beta chains form an alternating ring which encloses part of the gamma chain. CF(1) is attached to CF(0) by a central stalk formed by the gamma and epsilon chains, while a peripheral stalk is formed by the delta and b chains.

Its subcellular location is the cell inner membrane. Key component of the proton channel; it plays a direct role in the translocation of protons across the membrane. This chain is ATP synthase subunit a, found in Geobacter sp. (strain M21).